The chain runs to 274 residues: Anamorsin homolog (274 aa).

The segment at 1 to 154 (MDRTRKQCSV…KKPSWKIGSS (154 aa)) is N-terminal SAM-like domain. Positions 154–185 (SFALKKSTKGSVKVNLDDDLIDEDSLLTEEDM) are linker. C196, C205, C208, and C210 together coordinate [2Fe-2S] cluster. The interval 196-210 (CEVGSTRKACKNCTC) is fe-S binding site A. [4Fe-4S] cluster-binding residues include C235, C238, C246, and C249. 2 short sequence motifs (cx2C motif) span residues 235–238 (CGSC) and 246–249 (CSTC). Residues 235 to 249 (CGSCGLGDAFRCSTC) are fe-S binding site B.

The protein belongs to the anamorsin family. In terms of assembly, monomer. Requires [2Fe-2S] cluster as cofactor. [4Fe-4S] cluster is required as a cofactor.

The protein localises to the cytoplasm. Its subcellular location is the mitochondrion intermembrane space. In terms of biological role, component of the cytosolic iron-sulfur (Fe-S) protein assembly (CIA) machinery. Required for the maturation of extramitochondrial Fe-S proteins. Part of an electron transfer chain functioning in an early step of cytosolic Fe-S biogenesis, facilitating the de novo assembly of a [4Fe-4S] cluster on the cytosolic Fe-S scaffold complex. Electrons are transferred from NADPH via a FAD- and FMN-containing diflavin oxidoreductase. Together with the diflavin oxidoreductase, also required for the assembly of the diferric tyrosyl radical cofactor of ribonucleotide reductase (RNR), probably by providing electrons for reduction during radical cofactor maturation in the catalytic small subunit. The polypeptide is Anamorsin homolog (Ricinus communis (Castor bean)).